The sequence spans 373 residues: Transaldolase (373 aa).

The Schiff-base intermediate with substrate role is filled by lysine 143.

It belongs to the transaldolase family. Type 2 subfamily.

It is found in the cytoplasm. The enzyme catalyses D-sedoheptulose 7-phosphate + D-glyceraldehyde 3-phosphate = D-erythrose 4-phosphate + beta-D-fructose 6-phosphate. It participates in carbohydrate degradation; pentose phosphate pathway; D-glyceraldehyde 3-phosphate and beta-D-fructose 6-phosphate from D-ribose 5-phosphate and D-xylulose 5-phosphate (non-oxidative stage): step 2/3. Transaldolase is important for the balance of metabolites in the pentose-phosphate pathway. The chain is Transaldolase from Mycolicibacterium paratuberculosis (strain ATCC BAA-968 / K-10) (Mycobacterium paratuberculosis).